The following is a 232-amino-acid chain: Small ribosomal subunit protein uS3 (232 aa).

The region spanning 39-107 (IREILHKELK…DVVINIVEIR (69 aa)) is the KH type-2 domain.

The protein belongs to the universal ribosomal protein uS3 family. Part of the 30S ribosomal subunit. Forms a tight complex with proteins S10 and S14.

Its function is as follows. Binds the lower part of the 30S subunit head. Binds mRNA in the 70S ribosome, positioning it for translation. This is Small ribosomal subunit protein uS3 from Rhodopseudomonas palustris (strain HaA2).